Here is an 805-residue protein sequence, read N- to C-terminus: Cell division cycle 5-related protein (805 aa).

2 HTH myb-type domains span residues 1-58 and 59-108; these read MPRI…DPSI and KKTE…DQAQ. DNA-binding regions (H-T-H motif) lie at residues 31–54 and 82–104; these read WSRI…YEWL and WRTI…EYLL. Residues 108–127 are compositionally biased toward basic and acidic residues; the sequence is QAKEGDKDEGDDPRKLRPGE. Disordered regions lie at residues 108–143, 246–293, 409–442, and 530–556; these read QAKE…DPID, HLEG…HVKK, LSTP…QRSV, and LERR…VLRP. A coiled-coil region spans residues 142–193; the sequence is IDMDEDELEMLSEARARLANTQGKKAKRKAREKQLEEARRLAALQKRRELRA. Residues 246 to 274 are compositionally biased toward basic and acidic residues; sequence HLEGKMRDEIEQQERKKDKERMKKKKESD. Coiled coils occupy residues 511–542 and 678–804; these read EDAA…VQRE and YTRA…SKLQ.

Belongs to the CEF1 family. As to quaternary structure, component of the precatalytic, catalytic and postcatalytic spliceosome complexes.

The protein resides in the nucleus. The protein localises to the cytoplasm. Functionally, DNA-binding protein involved in cell cycle control. May act as a transcription activator. Plays a role in pre-mRNA splicing as core component of precatalytic, catalytic and postcatalytic spliceosomal complexes. May also play a role in the response to DNA damage (DDR). This is Cell division cycle 5-related protein (cdc5l) from Nematostella vectensis (Starlet sea anemone).